The chain runs to 781 residues: Cytosolic phospholipase A2 beta (781 aa).

In terms of domain architecture, C2 spans 1–112; sequence MAVAEVSRTC…RAGEFRRESF (112 aa). Ca(2+)-binding residues include Asp26, Asp32, Asp82, Asp84, and Asp90. The 536-residue stretch at 246–781 folds into the PLA2c domain; it reads EAGLRELAVR…VQRRRQRRPH (536 aa). Ser335 (nucleophile) is an active-site residue. Catalysis depends on Asp615, which acts as the Proton acceptor.

Ca(2+) is required as a cofactor. Widely expressed. Expressed at higher level in brain, heart, liver, cerebellum and pancreas.

The protein resides in the cytoplasm. It is found in the cytosol. Its subcellular location is the mitochondrion membrane. It localises to the early endosome membrane. The enzyme catalyses a 1,2-diacyl-sn-glycero-3-phosphocholine + H2O = a 1-acyl-sn-glycero-3-phosphocholine + a fatty acid + H(+). The catalysed reaction is a 1-acyl-sn-glycero-3-phosphocholine + H2O = sn-glycerol 3-phosphocholine + a fatty acid + H(+). It catalyses the reaction 1-hexadecanoyl-2-(9Z,12Z-octadecadienoyl)-sn-glycero-3-phosphoethanolamine + H2O = 1-hexadecanoyl-sn-glycero-3-phosphoethanolamine + (9Z,12Z)-octadecadienoate + H(+). It carries out the reaction 1-hexadecanoyl-2-(5Z,8Z,11Z,14Z-eicosatetraenoyl)-sn-glycero-3-phosphoethanolamine + H2O = 1-hexadecanoyl-sn-glycero-3-phosphoethanolamine + (5Z,8Z,11Z,14Z)-eicosatetraenoate + H(+). The enzyme catalyses 1-hexadecanoyl-sn-glycero-3-phosphocholine + H2O = sn-glycerol 3-phosphocholine + hexadecanoate + H(+). The catalysed reaction is 1-hexadecanoyl-2-(5Z,8Z,11Z,14Z-eicosatetraenoyl)-sn-glycero-3-phosphocholine + H2O = 1-hexadecanoyl-sn-glycero-3-phosphocholine + (5Z,8Z,11Z,14Z)-eicosatetraenoate + H(+). It catalyses the reaction 1-hexadecanoyl-2-(5Z,8Z,11Z,14Z-eicosatetraenoyl)-sn-glycero-3-phosphocholine + H2O = 2-(5Z,8Z,11Z,14Z)-eicosatetraenoyl-sn-glycero-3-phosphocholine + hexadecanoate + H(+). Stimulated by cytosolic Ca(2+). Functionally, calcium-dependent phospholipase A1 and A2 and lysophospholipase that may play a role in membrane phospholipid remodeling. Calcium-dependent phospholipase A2 and lysophospholipase. Cleaves the ester bond of the fatty acyl group attached to the sn-2 position of phosphatidylethanolamines, producing lysophospholipids that may be used in deacylation-reacylation cycles. Hydrolyzes lysophosphatidylcholines with low efficiency but is inefficient toward phosphatidylcholines. Its function is as follows. Calcium-dependent phospholipase A1 and A2 and lysophospholipase. Cleaves the ester bond of the fatty acyl group attached to the sn-1 or sn-2 position of diacyl phospholipids (phospholipase A1 and A2 activity, respectively), producing lysophospholipids that may be used in deacylation-reacylation cycles. Can further hydrolyze lysophospholipids enabling complete deacylation. Has no activity toward alkylacyl phospholipids. This is Cytosolic phospholipase A2 beta (PLA2G4B) from Homo sapiens (Human).